We begin with the raw amino-acid sequence, 169 residues long: Ribosome maturation factor RimM (169 aa).

The region spanning 96–166 (EDEFYFADLI…AVVVRPVEVE (71 aa)) is the PRC barrel domain.

This sequence belongs to the RimM family. As to quaternary structure, binds ribosomal protein uS19.

It localises to the cytoplasm. An accessory protein needed during the final step in the assembly of 30S ribosomal subunit, possibly for assembly of the head region. Essential for efficient processing of 16S rRNA. May be needed both before and after RbfA during the maturation of 16S rRNA. It has affinity for free ribosomal 30S subunits but not for 70S ribosomes. The protein is Ribosome maturation factor RimM of Acidiphilium cryptum (strain JF-5).